The sequence spans 130 residues: Small ribosomal subunit protein uS8 (130 aa).

It belongs to the universal ribosomal protein uS8 family. Part of the 30S ribosomal subunit. Contacts proteins S5 and S12.

One of the primary rRNA binding proteins, it binds directly to 16S rRNA central domain where it helps coordinate assembly of the platform of the 30S subunit. The polypeptide is Small ribosomal subunit protein uS8 (Coxiella burnetii (strain Dugway 5J108-111)).